We begin with the raw amino-acid sequence, 246 residues long: MAGHSKWANTRHRKAAQDAKRGKIFTKIIRELVTAAKLGGGDPDANPRLRAAVDKALSNNMTRDTLNRAIARGVGGDDDANMETIIYEGYGPGGTAIMIECLSDNRNRTVAEVRHAFSKCGGNLGTDGSVAYLFSKKGVISFEKGDEDTIMEAALEAGAEDVVTYDDGAIDVYTAWEEMGKVRDALEAAGLKADSAEVSMIPSTKADMDAETAPKLMRLIDMLEDCDDVQEVYHNGEISDEVAATL.

The disordered stretch occupies residues 1–20 (MAGHSKWANTRHRKAAQDAK).

Belongs to the TACO1 family.

It localises to the cytoplasm. The sequence is that of Probable transcriptional regulatory protein YebC from Shigella flexneri.